Here is a 157-residue protein sequence, read N- to C-terminus: Endoribonuclease YbeY (157 aa).

Zn(2+) is bound by residues His111, His115, and His121.

It belongs to the endoribonuclease YbeY family. Zn(2+) is required as a cofactor.

The protein resides in the cytoplasm. Functionally, single strand-specific metallo-endoribonuclease involved in late-stage 70S ribosome quality control and in maturation of the 3' terminus of the 16S rRNA. The sequence is that of Endoribonuclease YbeY from Pseudomonas entomophila (strain L48).